We begin with the raw amino-acid sequence, 349 residues long: Beta-hexosaminidase (349 aa).

Residues Asp64, Arg72, Arg138, and Lys168 to His169 each bind substrate. His181 serves as the catalytic Proton donor/acceptor. The active-site Nucleophile is the Asp252.

Belongs to the glycosyl hydrolase 3 family. NagZ subfamily.

It localises to the cytoplasm. It catalyses the reaction Hydrolysis of terminal non-reducing N-acetyl-D-hexosamine residues in N-acetyl-beta-D-hexosaminides.. The protein operates within cell wall biogenesis; peptidoglycan recycling. Plays a role in peptidoglycan recycling by cleaving the terminal beta-1,4-linked N-acetylglucosamine (GlcNAc) from peptide-linked peptidoglycan fragments, giving rise to free GlcNAc, anhydro-N-acetylmuramic acid and anhydro-N-acetylmuramic acid-linked peptides. The chain is Beta-hexosaminidase from Nitrosospira multiformis (strain ATCC 25196 / NCIMB 11849 / C 71).